We begin with the raw amino-acid sequence, 370 residues long: Histidinol-phosphate aminotransferase 2 (370 aa).

An N6-(pyridoxal phosphate)lysine modification is found at Lys-230.

It belongs to the class-II pyridoxal-phosphate-dependent aminotransferase family. Histidinol-phosphate aminotransferase subfamily. Homodimer. Pyridoxal 5'-phosphate is required as a cofactor.

It catalyses the reaction L-histidinol phosphate + 2-oxoglutarate = 3-(imidazol-4-yl)-2-oxopropyl phosphate + L-glutamate. The protein operates within amino-acid biosynthesis; L-histidine biosynthesis; L-histidine from 5-phospho-alpha-D-ribose 1-diphosphate: step 7/9. The protein is Histidinol-phosphate aminotransferase 2 of Pseudomonas fluorescens (strain ATCC BAA-477 / NRRL B-23932 / Pf-5).